Here is a 93-residue protein sequence, read N- to C-terminus: Large ribosomal subunit protein bL31 (93 aa).

The tract at residues 68–93 is disordered; that stretch reads GSADAAADEKKTDAKNNNKDNTSKED. Residues 74-93 are compositionally biased toward basic and acidic residues; the sequence is ADEKKTDAKNNNKDNTSKED.

This sequence belongs to the bacterial ribosomal protein bL31 family. Type A subfamily. As to quaternary structure, part of the 50S ribosomal subunit.

Functionally, binds the 23S rRNA. The sequence is that of Large ribosomal subunit protein bL31 from Prochlorococcus marinus (strain MIT 9303).